Consider the following 227-residue polypeptide: Orotidine 5'-phosphate decarboxylase (227 aa).

Substrate is bound by residues aspartate 12, lysine 34, 61 to 70 (DLKLHDIPNT), threonine 117, arginine 178, glutamine 187, glycine 207, and arginine 208. Catalysis depends on lysine 63, which acts as the Proton donor.

The protein belongs to the OMP decarboxylase family. Type 1 subfamily. In terms of assembly, homodimer.

The catalysed reaction is orotidine 5'-phosphate + H(+) = UMP + CO2. It functions in the pathway pyrimidine metabolism; UMP biosynthesis via de novo pathway; UMP from orotate: step 2/2. Functionally, catalyzes the decarboxylation of orotidine 5'-monophosphate (OMP) to uridine 5'-monophosphate (UMP). The protein is Orotidine 5'-phosphate decarboxylase of Anaeromyxobacter sp. (strain K).